The primary structure comprises 330 residues: Atypical chemokine receptor 1 (330 aa).

Over 1–57 (MGNCLYPVADDNSTKLAIKEDFLIDFPEDYYPDYNETDVEAAAPCHSCSLLNYSSLP) the chain is Extracellular. Residues Asn-12, Asn-35, and Asn-52 are each glycosylated (N-linked (GlcNAc...) asparagine). 2 cysteine pairs are disulfide-bonded: Cys-45-Cys-270 and Cys-123-Cys-189. Residues 58–78 (FFILVSILGILASGTILYALL) traverse the membrane as a helical segment. Topologically, residues 79–89 (RPLFRWQLYQD) are cytoplasmic. A helical membrane pass occupies residues 90-110 (RSTLVQLAVGSALFSIVVPIL). The Extracellular portion of the chain corresponds to 111–123 (ARGLSGALITSLC). A helical transmembrane segment spans residues 124–147 (HLAHLVAYGSAFAQALLIGYHACL). At 148-160 (GPQLGAGQVPGLR) the chain is on the cytoplasmic side. Residues 161 to 181 (LGVTVGLWGVAALLSLPVVLG) form a helical membrane-spanning segment. Residues 182–201 (SDTSQGLCTVTFSGEWETLR) lie on the Extracellular side of the membrane. Residues 202–222 (YIHAAACFAIFVLLPLGLLGT) traverse the membrane as a helical segment. Topologically, residues 223-238 (KGLKTVLGRAPCPWVD) are cytoplasmic. The chain crosses the membrane as a helical span at residues 239–259 (VLWVWFIFWWPQGMTLGLDSL). The Extracellular portion of the chain corresponds to 260–281 (VRSKAIVVSTCPAQQALDMLLD). Residues 282–302 (VAEALAILHCVATPLLLAWVC) form a helical membrane-spanning segment. At 303–330 (YQATHTSPPSLPLPTTQTSHLDTLGGKS) the chain is on the cytoplasmic side.

Belongs to the G-protein coupled receptor 1 family. Atypical chemokine receptor subfamily.

It is found in the early endosome. The protein resides in the recycling endosome. Its subcellular location is the membrane. Atypical chemokine receptor that controls chemokine levels and localization via high-affinity chemokine binding that is uncoupled from classic ligand-driven signal transduction cascades, resulting instead in chemokine sequestration, degradation, or transcytosis. Also known as interceptor (internalizing receptor) or chemokine-scavenging receptor or chemokine decoy receptor. Has a promiscuous chemokine-binding profile, interacting with inflammatory chemokines of both the CXC and the CC subfamilies but not with homeostatic chemokines. Acts as a receptor for chemokines including CCL2, CCL5, CCL7, CCL11, CCL13, CCL14, CCL17, CXCL5, CXCL6, IL8/CXCL8, CXCL11, GRO, RANTES, MCP-1 and TARC. May regulate chemokine bioavailability and, consequently, leukocyte recruitment through two distinct mechanisms: when expressed in endothelial cells, it sustains the abluminal to luminal transcytosis of tissue-derived chemokines and their subsequent presentation to circulating leukocytes; when expressed in erythrocytes, serves as blood reservoir of cognate chemokines but also as a chemokine sink, buffering potential surges in plasma chemokine levels. This chain is Atypical chemokine receptor 1 (ACKR1), found in Bos taurus (Bovine).